Consider the following 186-residue polypeptide: MSIVEVKQNAEQKMQQSVDSFKNSLTKIRTGRANPGLLDTVHVDYYGSMVPISQVANVSLLDARTISVSPWEKGMGAKIEKAIRDSDLGLNPAAQGDLIRVPMPAMTEERRKELTKVVRAEGEHAKVAVRNLRRDANEGVKKLLKEKLVSEDDERRAQDEIQKFTDRFIAEVDKLVAGKEQDIMAV.

Belongs to the RRF family.

Its subcellular location is the cytoplasm. Its function is as follows. Responsible for the release of ribosomes from messenger RNA at the termination of protein biosynthesis. May increase the efficiency of translation by recycling ribosomes from one round of translation to another. The protein is Ribosome-recycling factor of Polaromonas sp. (strain JS666 / ATCC BAA-500).